The following is a 128-amino-acid chain: Early 4 ORF1 protein (128 aa).

Topologically, residues 1 to 26 (MAAAVEALYVVLEREGAILPRQEGFS) are cytoplasmic. Residues 27-47 (GVYVFFSPINFVIPPMGAVML) form a helical membrane-spanning segment. Residues 48–99 (SLRLRVCIPPGYFGRFLALTDVNQPDVFTESYIMTPDMTEELSVVLFNHGDQ) lie on the Extracellular side of the membrane. The helical transmembrane segment at 100 to 120 (FFYGHAGMAVVRLMLIRVVFP) threads the bilayer. Topologically, residues 121–128 (VVRQASNV) are cytoplasmic. Residues 125 to 128 (ASNV) carry the PBZ domain binding motif motif.

Belongs to the adenoviridae E4-ORF1 family. In terms of assembly, may interact with host PDZ proteins through the PDZ domain binding motif (PBM), namely host DLG1, PATJ and TJP2.

The protein resides in the host membrane. May modulate tight-junctions functions of infected cells through interactions with PDZ proteins. E4 ORF1 has ben show for Adenovirus 9 to interact with protein involved in tight junction regulation. May play a role in mTOR activation by activating PI3-kinase, thus overriding cellular checkpoint for translation. The chain is Early 4 ORF1 protein from Human adenovirus C serotype 2 (HAdV-2).